Reading from the N-terminus, the 59-residue chain is Protein translocase subunit SecE (59 aa).

The chain crosses the membrane as a helical span at residues 37-57; that stretch reads GIGIIIIGVIGFIISIIAQLL.

It belongs to the SecE/SEC61-gamma family. In terms of assembly, component of the Sec protein translocase complex. Heterotrimer consisting of SecY (alpha), SecG (beta) and SecE (gamma) subunits. The heterotrimers can form oligomers, although 1 heterotrimer is thought to be able to translocate proteins. Interacts with the ribosome. May interact with SecDF, and other proteins may be involved.

The protein localises to the cell membrane. In terms of biological role, essential subunit of the Sec protein translocation channel SecYEG. Clamps together the 2 halves of SecY. May contact the channel plug during translocation. The chain is Protein translocase subunit SecE from Methanothermobacter thermautotrophicus (strain ATCC 29096 / DSM 1053 / JCM 10044 / NBRC 100330 / Delta H) (Methanobacterium thermoautotrophicum).